Reading from the N-terminus, the 418-residue chain is Dual-specificity RNA methyltransferase RlmN (418 aa).

The interval 1-21 (MADTSLMPIPGQVDPVPAPRD) is disordered. Catalysis depends on Glu-122, which acts as the Proton acceptor. Residues 128 to 383 (DADRGTLCVS…APVRTPRGRD (256 aa)) enclose the Radical SAM core domain. Cys-135 and Cys-388 form a disulfide bridge. Cys-142, Cys-146, and Cys-149 together coordinate [4Fe-4S] cluster. S-adenosyl-L-methionine contacts are provided by residues 212–213 (GE), Ser-244, 266–268 (SLH), and Asn-345. Residue Cys-388 is the S-methylcysteine intermediate of the active site. The disordered stretch occupies residues 393–418 (TAAQKKSRAERDREAAAEAEAAASQA). Basic and acidic residues predominate over residues 399 to 408 (SRAERDREAA).

It belongs to the radical SAM superfamily. RlmN family. [4Fe-4S] cluster serves as cofactor.

It is found in the cytoplasm. It catalyses the reaction adenosine(2503) in 23S rRNA + 2 reduced [2Fe-2S]-[ferredoxin] + 2 S-adenosyl-L-methionine = 2-methyladenosine(2503) in 23S rRNA + 5'-deoxyadenosine + L-methionine + 2 oxidized [2Fe-2S]-[ferredoxin] + S-adenosyl-L-homocysteine. The enzyme catalyses adenosine(37) in tRNA + 2 reduced [2Fe-2S]-[ferredoxin] + 2 S-adenosyl-L-methionine = 2-methyladenosine(37) in tRNA + 5'-deoxyadenosine + L-methionine + 2 oxidized [2Fe-2S]-[ferredoxin] + S-adenosyl-L-homocysteine. Functionally, specifically methylates position 2 of adenine 2503 in 23S rRNA and position 2 of adenine 37 in tRNAs. m2A2503 modification seems to play a crucial role in the proofreading step occurring at the peptidyl transferase center and thus would serve to optimize ribosomal fidelity. In Erythrobacter litoralis (strain HTCC2594), this protein is Dual-specificity RNA methyltransferase RlmN.